Reading from the N-terminus, the 209-residue chain is Bilin biosynthesis protein RpcF (209 aa).

Belongs to the CpcE/RpcE/PecE family.

Its function is as follows. An enzyme involved in the biosynthesis of bilin. Might be involved in the specific attachment of phycoerythrobilin (PEB) to the R-phycocyanin II alpha chain. The sequence is that of Bilin biosynthesis protein RpcF (rpcF) from Synechococcus sp. (strain WH8020).